The primary structure comprises 461 residues: Trimethylamine monooxygenase (461 aa).

Positions 14, 39, 40, 41, 47, 48, and 64 each coordinate FAD. 2 residues coordinate NADP(+): Trp72 and Asn74. FAD-binding residues include Asn74 and Ala127. NADP(+) contacts are provided by Ser206, Ser207, Ser209, Arg230, and Thr231. FAD-binding residues include Gln319 and Thr322. Arg413 is an NADP(+) binding site.

This sequence belongs to the FMO family. FAD serves as cofactor.

The enzyme catalyses trimethylamine + NADPH + O2 = trimethylamine N-oxide + NADP(+) + H2O. In terms of biological role, catalyzes the oxidation of trimethylamine (TMA) to produce trimethylamine N-oxide (TMAO). The produced TMAO is accumulated in the cell, functioning as a piezolyte, improving both growth and survival at high hydrostatic pressure (HHP). The sequence is that of Trimethylamine monooxygenase from Myroides profundi.